A 371-amino-acid chain; its full sequence is Thyroid transcription factor 1 (371 aa).

The homeobox DNA-binding region spans 161–220 (RRKRRVLFSQAQVYELERRFKQQKYLSAPEREHLASMIHLTPTQVKIWFQNHRYKMKRQA). Disordered stretches follow at residues 219-294 (QAKD…QQQA) and 308-342 (SGGPGLGAHPGHQPGSAGQSPDLAHHAASPAALQG). The span at 233 to 243 (SGGGGGGGGAG) shows a compositional bias: gly residues. Low complexity-rich tracts occupy residues 244–253 (CPQQQQAQQQ) and 272–294 (AGAPAPGAGSLQGHAQQQAQQQA).

The protein belongs to the NK-2 homeobox family. Phosphorylated on serine residues. As to expression, thyroid, lung and CNS.

Its subcellular location is the nucleus. In terms of biological role, transcription factor that binds and activates the promoter of thyroid specific genes such as thyroglobulin, thyroperoxidase, and thyrotropin receptor. Crucial in the maintenance of the thyroid differentiation phenotype. May play a role in lung development and surfactant homeostasis. The polypeptide is Thyroid transcription factor 1 (TITF1) (Canis lupus familiaris (Dog)).